The following is a 947-amino-acid chain: Bifunctional glutamine synthetase adenylyltransferase/adenylyl-removing enzyme (947 aa).

The interval 1 to 440 (MTPLSSPLSQ…VFNELIGDDE (440 aa)) is adenylyl removase. An adenylyl transferase region spans residues 450 to 947 (SEPWREVWQD…ASWRKWLVAV (498 aa)).

This sequence belongs to the GlnE family. Requires Mg(2+) as cofactor.

The enzyme catalyses [glutamine synthetase]-O(4)-(5'-adenylyl)-L-tyrosine + phosphate = [glutamine synthetase]-L-tyrosine + ADP. It carries out the reaction [glutamine synthetase]-L-tyrosine + ATP = [glutamine synthetase]-O(4)-(5'-adenylyl)-L-tyrosine + diphosphate. Involved in the regulation of glutamine synthetase GlnA, a key enzyme in the process to assimilate ammonia. When cellular nitrogen levels are high, the C-terminal adenylyl transferase (AT) inactivates GlnA by covalent transfer of an adenylyl group from ATP to specific tyrosine residue of GlnA, thus reducing its activity. Conversely, when nitrogen levels are low, the N-terminal adenylyl removase (AR) activates GlnA by removing the adenylyl group by phosphorolysis, increasing its activity. The regulatory region of GlnE binds the signal transduction protein PII (GlnB) which indicates the nitrogen status of the cell. In Salmonella paratyphi B (strain ATCC BAA-1250 / SPB7), this protein is Bifunctional glutamine synthetase adenylyltransferase/adenylyl-removing enzyme.